The sequence spans 1187 residues: MRAVPTWIDKVHDRDKVEQCIYDLAFRPDGSQLIVAAGNRVLVYDTADGTLIQPLKGHKDTVYCVAYAKDGKRFASGSADKSIIIWTSKLEGILKYTHNDSIQCVSYNPVTHQLASCSSGDFGLWSPEQKSVSKHKVSSKITCCGWTNDGQYLALGMMNGVVSIRNKNGEEKVKIERPGGSSSPVWSIAWNPSKDEHNDILAVADWGQKLSFYQLSGKQIGKDRSLTFDPCCVSFFSKGEYMVLCGSDRQAALYTRDGVRLGSIAEQNAWVWTCRVKPDSNYVVVGCQDGTIAFFQLIFSTVHGLYKDRYAYRDSMTDVIVQHLITEQKVRIKCRELVKKIAIYRSRLAIQLPEKILIYELLSDDSADMHYRVKEKICRRFECNLLVVCSQHIILCQEKRLQCLSFTALRQREWLMESLIRYIKVIGGPAGREGLLVGLKNGAILKIFVDNPFPITLLKQNTSVRCLDMSSNRSRLAVVDEHNTCLVYDIHTRELLFQEPNANSVAWNTQCEDMLCFSGGGFLNIKACSFPVHQQKLQGFVVGYNGSRIFCLHVYSMAAVEVPQSAPMYQYLERRMFQQAYNIACLGVTDSDWRDLATEALEGLDFHTAKKAFIRIRDLRYLELISSIEERKKRGETDNQLFLADVFAYQGKFHEAAKLYRRSGQDGRALSMYTDLRMFDYAKDFLGSADPKDTKLLMKKQADWAKNSREPRAAAEMYLSAGEHLKAIQIIGEHGWVDMLIDVGRRLDKAERAALSRCAVFLQQLQQHGYAAELYSKMGDLRALLQLHVHATHWDEAFSLVEKHPQFRDDVYVPYAQWLAEHDRFEEAQRAFHKAGRQAEAVRVLEQLTHNAVVESRFSDASYYYWMLSMQCLDIAREDSEQKQEMLKKFHSFQHLAELYHVYHSVHRYMSEPFSSNMPEILFNISRFLFHNLSTHTPMGISKVDTLYALAKQSKLLGAYKVSRHAFEKLQSLKIPARYQDSVELSSLTVRSKPYRDNEDLIPMCYRCSTNNPLLNNQGNSCINCRQPFIFSASSYEVLPLVEFYLDQGISDEEAVSLIDLEVPRVEKNKSWQEMSSGESQCLKLEDGPDDPEDDPFTAKLSFEQGGSVFVPVRVSRAVLRSMSRRDVLIKRWPAPLSWQYYRSLLPDVSITMCPSCFQMFHSEDYELLVLQHSCCPFCRRPIDESC.

WD repeat units lie at residues 16 to 54, 57 to 97, 99 to 135, 137 to 175, 180 to 223, 225 to 264, 266 to 306, and 459 to 498; these read KVEQ…LIQP, GHKD…LKYT, NDSI…VSKH, VSSK…KVKI, GSSS…IGKD, SLTF…LGSI, EQNA…HGLY, and KQNT…LLFQ. Residues 1070–1094 are disordered; sequence KSWQEMSSGESQCLKLEDGPDDPED.

In terms of assembly, component of the IFT complex A (IFT-A) complex.

It localises to the cell projection. The protein resides in the cilium. The protein localises to the cytoplasm. Its subcellular location is the cytoskeleton. It is found in the cilium basal body. Functionally, required for cilia formation during embryonal development. Acts as a negative regulator of Shh signaling. This is Intraflagellar transport protein 122 homolog (ift122) from Danio rerio (Zebrafish).